A 248-amino-acid polypeptide reads, in one-letter code: Tyrosine recombinase XerD-like (248 aa).

The region spanning 1 to 72 is the Core-binding (CB) domain; that stretch reads MIAFIEPFLA…TVNQFLYYLY (72 aa). Residues 92-248 form the Tyr recombinase domain; it reads SLKPQLTRLD…PITLEKYYKM (157 aa). Residue R213 is part of the active site. The O-(3'-phospho-DNA)-tyrosine intermediate role is filled by Y245.

It belongs to the 'phage' integrase family. XerD-like subfamily.

Its subcellular location is the cytoplasm. Functionally, putative tyrosine recombinase. Not involved in the cutting and rejoining of the recombining DNA molecules on dif(SL) site. The polypeptide is Tyrosine recombinase XerD-like (Streptococcus equi subsp. zooepidemicus (strain H70)).